The sequence spans 178 residues: Anthranilate synthase component 2 (178 aa).

The Glutamine amidotransferase type-1 domain maps to 1-178 (MIVVVDCKDS…RNFVEMCHDG (178 aa)). Residue 49–51 (GPG) coordinates L-glutamine. Catalysis depends on C71, which acts as the Nucleophile; for GATase activity. Residues Q75 and 120–121 (SL) each bind L-glutamine. Active-site for GATase activity residues include H155 and E157.

As to quaternary structure, heterotetramer consisting of two non-identical subunits: a beta subunit (TrpG) and a large alpha subunit (TrpE).

It carries out the reaction chorismate + L-glutamine = anthranilate + pyruvate + L-glutamate + H(+). Its pathway is amino-acid biosynthesis; L-tryptophan biosynthesis; L-tryptophan from chorismate: step 1/5. Its function is as follows. Part of a heterotetrameric complex that catalyzes the two-step biosynthesis of anthranilate, an intermediate in the biosynthesis of L-tryptophan. In the first step, the glutamine-binding beta subunit (TrpG) of anthranilate synthase (AS) provides the glutamine amidotransferase activity which generates ammonia as a substrate that, along with chorismate, is used in the second step, catalyzed by the large alpha subunit of AS (TrpE) to produce anthranilate. In the absence of TrpG, TrpE can synthesize anthranilate directly from chorismate and high concentrations of ammonia. In Archaeoglobus fulgidus (strain ATCC 49558 / DSM 4304 / JCM 9628 / NBRC 100126 / VC-16), this protein is Anthranilate synthase component 2 (trpG).